We begin with the raw amino-acid sequence, 68 residues long: Copper transport protein ATOX1 (68 aa).

The 63-residue stretch at 1 to 63 folds into the HMA domain; sequence MPKHEFSVDM…TLNKTGKAVS (63 aa). Cu cation contacts are provided by Cys-12 and Cys-15. At Ser-47 the chain carries Phosphoserine. Residue Lys-60 is modified to N6-acetyllysine.

The protein belongs to the ATX1 family. Homodimer. Interacts with ATP7B. Interacts with ATP7A. Interacts (via dimer form) with SLC31A1 (via C-terminal domain); this interaction improves ATOX1 stability and controls intracellular Cu(I) levels.

Its function is as follows. Binds and deliver cytosolic copper to the copper ATPase proteins. May be important in cellular antioxidant defense. This Mus musculus (Mouse) protein is Copper transport protein ATOX1.